A 224-amino-acid chain; its full sequence is Flagellar L-ring protein (224 aa).

The N-terminal stretch at 1-15 (MARYFILAVALLLTA) is a signal peptide. A lipid anchor (N-palmitoyl cysteine) is attached at cysteine 16. Cysteine 16 is lipidated: S-diacylglycerol cysteine.

Belongs to the FlgH family. The basal body constitutes a major portion of the flagellar organelle and consists of four rings (L,P,S, and M) mounted on a central rod.

The protein localises to the cell outer membrane. The protein resides in the bacterial flagellum basal body. In terms of biological role, assembles around the rod to form the L-ring and probably protects the motor/basal body from shearing forces during rotation. This is Flagellar L-ring protein from Shewanella sp. (strain MR-7).